The sequence spans 318 residues: Ubiquinol oxidase, mitochondrial (318 aa).

The transit peptide at 1–46 (MTVMRGLLNGGRYGNRYIWTAISLRHPEVMEGNGLESAVMQWRRML) directs the protein to the mitochondrion. A helical membrane pass occupies residues 143–163 (AMMLETVAAVPGMVGGMLLHL). Fe cation contacts are provided by E147, E186, and H189. The chain crosses the membrane as a helical span at residues 205–225 (LLVLAVQGVFFNSFFVLYVLS). 3 residues coordinate Fe cation: E237, E288, and H291.

Belongs to the alternative oxidase family. In terms of assembly, homodimer; disulfide-linked. The cofactor is Fe cation.

It is found in the mitochondrion inner membrane. It carries out the reaction 2 a ubiquinol + O2 = 2 a ubiquinone + 2 H2O. Catalyzes the cyanide-resistant oxidation of ubiquinol and the reduction of molecular oxygen to water, but does not translocate protons and consequently is not linked to oxidative phosphorylation. May increase respiration when the cytochrome respiratory pathway is restricted, or in response to low temperatures. The sequence is that of Ubiquinol oxidase, mitochondrial (AOMI 1) from Mangifera indica (Mango).